The primary structure comprises 1026 residues: Translation initiation factor IF-2, chloroplastic (1026 aa).

The transit peptide at 1–63 (MPSMLVLVGT…KKWLCRYSVS (63 aa)) directs the protein to the chloroplast. A compositionally biased stretch (basic and acidic residues) spans 158 to 173 (AEKLEIPKPGNKEGGE). 3 disordered regions span residues 158–208 (AEKL…TMKS), 230–284 (FNRG…PPVK), and 300–393 (VSEE…KWSK). The segment covering 178–194 (SQPSANSSNSRNGSYAN) has biased composition (polar residues). A compositionally biased stretch (pro residues) spans 254–269 (LAPPQPPFRPQPPVRP). Positions 306-317 (SSVKSKERKPIL) are enriched in basic and acidic residues. Basic residues predominate over residues 384–393 (SGRKGRKWSK). The region spanning 499–672 (DRPPVITIMG…MLVAELQELK (174 aa)) is the tr-type G domain. Residues 508–515 (GHVDHGKT) are G1. 508–515 (GHVDHGKT) contacts GTP. Residues 533 to 537 (GITQG) are G2. The interval 558–561 (DTPG) is G3. Residues 558 to 562 (DTPGH) and 612 to 615 (NKID) contribute to the GTP site. Positions 612-615 (NKID) are G4. The tract at residues 648 to 650 (SAL) is G5.

It belongs to the TRAFAC class translation factor GTPase superfamily. Classic translation factor GTPase family. IF-2 subfamily.

It is found in the plastid. The protein localises to the chloroplast. One of the essential components for the initiation of protein synthesis. Protects formylmethionyl-tRNA from spontaneous hydrolysis and promotes its binding to the 30S ribosomal subunits. Also involved in the hydrolysis of GTP during the formation of the 70S ribosomal complex. This chain is Translation initiation factor IF-2, chloroplastic, found in Arabidopsis thaliana (Mouse-ear cress).